The sequence spans 115 residues: NADH-ubiquinone oxidoreductase chain 3 (115 aa).

3 helical membrane passes run 1-21, 58-78, and 84-104; these read MMML…VMLL, IAVI…IVII, and IMVW…GLYY.

Belongs to the complex I subunit 3 family.

It localises to the mitochondrion membrane. The catalysed reaction is a ubiquinone + NADH + 5 H(+)(in) = a ubiquinol + NAD(+) + 4 H(+)(out). Core subunit of the mitochondrial membrane respiratory chain NADH dehydrogenase (Complex I) that is believed to belong to the minimal assembly required for catalysis. Complex I functions in the transfer of electrons from NADH to the respiratory chain. The immediate electron acceptor for the enzyme is believed to be ubiquinone. The polypeptide is NADH-ubiquinone oxidoreductase chain 3 (ND3) (Locusta migratoria (Migratory locust)).